The primary structure comprises 122 residues: Large ribosomal subunit protein uL14 (122 aa).

This sequence belongs to the universal ribosomal protein uL14 family. Part of the 50S ribosomal subunit. Forms a cluster with proteins L3 and L19. In the 70S ribosome, L14 and L19 interact and together make contacts with the 16S rRNA in bridges B5 and B8.

Its function is as follows. Binds to 23S rRNA. Forms part of two intersubunit bridges in the 70S ribosome. This Mycoplasma genitalium (strain ATCC 33530 / DSM 19775 / NCTC 10195 / G37) (Mycoplasmoides genitalium) protein is Large ribosomal subunit protein uL14.